We begin with the raw amino-acid sequence, 509 residues long: Dihydrolipoyl dehydrogenase, mitochondrial (509 aa).

Residues M1–Y35 constitute a mitochondrion transit peptide. The residue at position 66 (K66) is an N6-acetyllysine; alternate. K66 carries the post-translational modification N6-succinyllysine; alternate. FAD contacts are provided by residues E71–C80 and K89. The cysteines at positions 80 and 85 are disulfide-linked. K104, K122, K132, and K143 each carry N6-acetyllysine; alternate. N6-succinyllysine; alternate is present on residues K104, K122, K132, and K143. Residue G154 participates in FAD binding. N6-succinyllysine is present on residues K159 and K166. T183–S185 serves as a coordination point for FAD. NAD(+)-binding positions include G220–E227 and E243. N6-succinyllysine is present on residues K273 and K277. V278 lines the NAD(+) pocket. Phosphoserine is present on residues S285 and S297. G314 contacts NAD(+). Position 346 is an N6-acetyllysine (K346). Residues D355 and M361–H364 contribute to the FAD site. N6-acetyllysine; alternate is present on K410. At K410 the chain carries N6-succinyllysine; alternate. Residues K417 and K420 each carry the N6-acetyllysine modification. The residue at position 430 (K430) is an N6-succinyllysine. H487 functions as the Proton acceptor in the catalytic mechanism. The residue at position 502 (S502) is a Phosphoserine. The residue at position 505 (K505) is an N6-acetyllysine; alternate. At K505 the chain carries N6-succinyllysine; alternate.

The protein belongs to the class-I pyridine nucleotide-disulfide oxidoreductase family. In terms of assembly, homodimer. Part of the multimeric pyruvate dehydrogenase complex that contains multiple copies of pyruvate dehydrogenase (subunits PDHA (PDHA1 or PDHA2) and PDHB, E1), dihydrolipoamide acetyltransferase (DLAT, E2) and lipoamide dehydrogenase (DLD, E3). These subunits are bound to an inner core composed of about 48 DLAT and 12 PDHX molecules (by non covalent bonds). The 2-oxoglutarate dehydrogenase complex is composed of OGDH (2-oxoglutarate dehydrogenase; E1), DLST (dihydrolipoamide succinyltransferase; E2), DLD (dihydrolipoamide dehydrogenase; E3) and the assembly factor KGD4. It contains multiple copies of the three enzymatic components (E1, E2 and E3). In the nucleus, the 2-oxoglutarate dehydrogenase complex associates with KAT2A. Interacts with PDHX. It depends on FAD as a cofactor. Post-translationally, tyrosine phosphorylated.

It localises to the mitochondrion matrix. The protein resides in the nucleus. The protein localises to the cell projection. Its subcellular location is the cilium. It is found in the flagellum. It localises to the cytoplasmic vesicle. The protein resides in the secretory vesicle. The protein localises to the acrosome. It catalyses the reaction N(6)-[(R)-dihydrolipoyl]-L-lysyl-[protein] + NAD(+) = N(6)-[(R)-lipoyl]-L-lysyl-[protein] + NADH + H(+). Its function is as follows. Lipoamide dehydrogenase is a component of the glycine cleavage system as well as an E3 component of three alpha-ketoacid dehydrogenase complexes (pyruvate-, alpha-ketoglutarate-, and branched-chain amino acid-dehydrogenase complex). The 2-oxoglutarate dehydrogenase complex is mainly active in the mitochondrion. A fraction of the 2-oxoglutarate dehydrogenase complex also localizes in the nucleus and is required for lysine succinylation of histones: associates with KAT2A on chromatin and provides succinyl-CoA to histone succinyltransferase KAT2A. In monomeric form may have additional moonlighting function as serine protease. Involved in the hyperactivation of spermatazoa during capacitation and in the spermatazoal acrosome reaction. This is Dihydrolipoyl dehydrogenase, mitochondrial (DLD) from Canis lupus familiaris (Dog).